The chain runs to 1434 residues: DNA-directed RNA polymerase subunit beta (1434 aa).

This sequence belongs to the RNA polymerase beta chain family. As to quaternary structure, the RNAP catalytic core consists of 2 alpha, 1 beta, 1 beta' and 1 omega subunit. When a sigma factor is associated with the core the holoenzyme is formed, which can initiate transcription.

The catalysed reaction is RNA(n) + a ribonucleoside 5'-triphosphate = RNA(n+1) + diphosphate. Functionally, DNA-dependent RNA polymerase catalyzes the transcription of DNA into RNA using the four ribonucleoside triphosphates as substrates. The polypeptide is DNA-directed RNA polymerase subunit beta (Ureaplasma urealyticum serovar 10 (strain ATCC 33699 / Western)).